The primary structure comprises 360 residues: F420-dependent hydroxymycolic acid dehydrogenase (360 aa).

The tat-type signal signal peptide spans Met-1–Ala-40. Asp-77 lines the coenzyme F420-(gamma-Glu)n pocket. His-78 functions as the Proton donor in the catalytic mechanism. Thr-145–Gly-146 is a binding site for coenzyme F420-(gamma-Glu)n. Glu-147 acts as the Proton acceptor in catalysis. Residues Asn-150 and Ser-213–Gly-214 each bind coenzyme F420-(gamma-Glu)n.

This sequence belongs to the F420-dependent hydroxymycolic acid dehydrogenase family. Homodimer. Is exported by the Tat system. The position of the signal peptide cleavage has not been experimentally proven. Post-translationally, may be lipidated.

It localises to the cell envelope. It functions in the pathway lipid metabolism; mycolic acid biosynthesis. With respect to regulation, is inhibited by the anti-tuberculous drug PA-824, a bicyclic 4-nitroimidazole class compound. Therefore, this is consistent with the finding that PA-824 inhibits the formation of K-MAs and causes an accumulation of hydroxymycolic acids (H-MAs) in M.tuberculosis. Catalyzes the coenzyme F420-dependent oxidation of hydroxymycolic acids (H-MAs) to ketomycolic acids (K-MAs), a lipid class making up the mycobacterial pseudo-outer membrane and over one-third of the dry weight of M.tuberculosis. Does not exhibit F420-dependent glucose-6-phosphate dehydrogenase (FGD) activity. In Mycobacterium tuberculosis (strain ATCC 25618 / H37Rv), this protein is F420-dependent hydroxymycolic acid dehydrogenase.